The chain runs to 451 residues: MNKKILFLGVGGIGVSALAIAAKRLGAHVAGYDSVANKLTAKLEALGIVIFTSPNGVDVANFDIVVYSSAILSSHPLLSQARSLGIQCLQRAMFLSVLMKDFSYSIAITGTHGKTTTSSVLATLLCQLDKYSSFIVGGVVKYADSNIQVNGTDKLVIEADESDASFLFLSPQVVIITNIDLDHMATYNNSYQTLLENFTDFVSKESVKSIYLCVDDQGCRDLLAKYNQSDKNVTSYGFSIDADVQIYDYHIIDEITHFKIRYKGDDLSFKLQLPGRYNVQNATACIIACLDLGFKYEDIRNALIKVTGVARRFDLYTKVISGHQVTVIDDYGHHPVEVANSISAVRDRYPNKKIIHVFQPHRYTRNRDLIKDWPKALSLADQLILLPTYSADEQIIKGAESQDIVKGLSGYLLADGFDHAIYFLEKLANENTVILIQGAGDVTNLVEILSE.

Residue Gly110–Thr116 participates in ATP binding.

This sequence belongs to the MurCDEF family.

The protein localises to the cytoplasm. The enzyme catalyses UDP-N-acetyl-alpha-D-muramate + L-alanine + ATP = UDP-N-acetyl-alpha-D-muramoyl-L-alanine + ADP + phosphate + H(+). Its pathway is cell wall biogenesis; peptidoglycan biosynthesis. Functionally, cell wall formation. The polypeptide is UDP-N-acetylmuramate--L-alanine ligase (Francisella tularensis subsp. mediasiatica (strain FSC147)).